The following is a 524-amino-acid chain: Bifunctional purine biosynthesis protein PurH (524 aa).

An MGS-like domain is found at 1–149; it reads MSDPLIKRAL…KNNESVTVLT (149 aa).

The protein belongs to the PurH family.

The enzyme catalyses (6R)-10-formyltetrahydrofolate + 5-amino-1-(5-phospho-beta-D-ribosyl)imidazole-4-carboxamide = 5-formamido-1-(5-phospho-D-ribosyl)imidazole-4-carboxamide + (6S)-5,6,7,8-tetrahydrofolate. It carries out the reaction IMP + H2O = 5-formamido-1-(5-phospho-D-ribosyl)imidazole-4-carboxamide. Its pathway is purine metabolism; IMP biosynthesis via de novo pathway; 5-formamido-1-(5-phospho-D-ribosyl)imidazole-4-carboxamide from 5-amino-1-(5-phospho-D-ribosyl)imidazole-4-carboxamide (10-formyl THF route): step 1/1. It participates in purine metabolism; IMP biosynthesis via de novo pathway; IMP from 5-formamido-1-(5-phospho-D-ribosyl)imidazole-4-carboxamide: step 1/1. The sequence is that of Bifunctional purine biosynthesis protein PurH from Chlorobium luteolum (strain DSM 273 / BCRC 81028 / 2530) (Pelodictyon luteolum).